A 340-amino-acid chain; its full sequence is Ferrochelatase (340 aa).

Fe cation is bound by residues histidine 189 and glutamate 292.

This sequence belongs to the ferrochelatase family.

It is found in the cytoplasm. It catalyses the reaction heme b + 2 H(+) = protoporphyrin IX + Fe(2+). It participates in porphyrin-containing compound metabolism; protoheme biosynthesis; protoheme from protoporphyrin-IX: step 1/1. Functionally, catalyzes the ferrous insertion into protoporphyrin IX. The polypeptide is Ferrochelatase (Pseudomonas paraeruginosa (strain DSM 24068 / PA7) (Pseudomonas aeruginosa (strain PA7))).